A 465-amino-acid polypeptide reads, in one-letter code: Pre-mRNA-splicing factor URN1 (465 aa).

Positions Met1–Leu32 constitute a WW domain. Disordered stretches follow at residues Glu28–Arg49, Glu144–Asp198, and Glu266–Val288. The residue at position 150 (Ser150) is a Phosphoserine. The span at Leu160–Ser175 shows a compositional bias: polar residues. Residues Gly176–Glu192 are compositionally biased toward acidic residues. Positions Asp212–Glu266 constitute an FF domain. Acidic residues predominate over residues Glu274–Val288.

Component of the precatalytic spliceosomal complex B. Interacts with PRP19.

It is found in the nucleus. In terms of biological role, component of the spliceosome involved in mRNA processing. The sequence is that of Pre-mRNA-splicing factor URN1 (URN1) from Saccharomyces cerevisiae (strain ATCC 204508 / S288c) (Baker's yeast).